A 286-amino-acid chain; its full sequence is 4-diphosphocytidyl-2-C-methyl-D-erythritol kinase (286 aa).

Lysine 11 is an active-site residue. Residue 93–103 (PFGAGLGGGSS) coordinates ATP. The active site involves aspartate 135.

Belongs to the GHMP kinase family. IspE subfamily.

The catalysed reaction is 4-CDP-2-C-methyl-D-erythritol + ATP = 4-CDP-2-C-methyl-D-erythritol 2-phosphate + ADP + H(+). Its pathway is isoprenoid biosynthesis; isopentenyl diphosphate biosynthesis via DXP pathway; isopentenyl diphosphate from 1-deoxy-D-xylulose 5-phosphate: step 3/6. In terms of biological role, catalyzes the phosphorylation of the position 2 hydroxy group of 4-diphosphocytidyl-2C-methyl-D-erythritol. The chain is 4-diphosphocytidyl-2-C-methyl-D-erythritol kinase from Chlorobaculum tepidum (strain ATCC 49652 / DSM 12025 / NBRC 103806 / TLS) (Chlorobium tepidum).